Consider the following 93-residue polypeptide: Parbolysin P2 (93 aa).

Cystine bridges form between Cys-16–Cys-37 and Cys-22–Cys-33.

Belongs to the worm cytolysin family. In terms of tissue distribution, localized within the skin and proboscis and are most readily isolated from body mucus secretions.

The protein localises to the secreted. In terms of biological role, cytolysin that shows hemolytic activity (on bovine erythrocytes, HC(50)=5.75 mg/ml). This hemolytic activity is completely inhibited by small unilamelar vesicles composed of PC/PG, PC/PI and PC/PS in 1:1 molar ratios (with at least 100 mg/ml concentration). The protein is Parbolysin P2 of Parborlasia corrugatus (Antarctic nemertean worm).